The sequence spans 361 residues: Phosphoserine aminotransferase (361 aa).

Arg-43 is an L-glutamate binding site. Pyridoxal 5'-phosphate-binding positions include 77–78 (AS), Trp-103, Thr-153, Asp-173, and Gln-196. N6-(pyridoxal phosphate)lysine is present on Lys-197. 238–239 (NT) is a pyridoxal 5'-phosphate binding site.

Belongs to the class-V pyridoxal-phosphate-dependent aminotransferase family. SerC subfamily. Homodimer. The cofactor is pyridoxal 5'-phosphate.

Its subcellular location is the cytoplasm. It catalyses the reaction O-phospho-L-serine + 2-oxoglutarate = 3-phosphooxypyruvate + L-glutamate. The enzyme catalyses 4-(phosphooxy)-L-threonine + 2-oxoglutarate = (R)-3-hydroxy-2-oxo-4-phosphooxybutanoate + L-glutamate. Its pathway is amino-acid biosynthesis; L-serine biosynthesis; L-serine from 3-phospho-D-glycerate: step 2/3. It functions in the pathway cofactor biosynthesis; pyridoxine 5'-phosphate biosynthesis; pyridoxine 5'-phosphate from D-erythrose 4-phosphate: step 3/5. Its function is as follows. Catalyzes the reversible conversion of 3-phosphohydroxypyruvate to phosphoserine and of 3-hydroxy-2-oxo-4-phosphonooxybutanoate to phosphohydroxythreonine. The sequence is that of Phosphoserine aminotransferase from Pseudomonas syringae pv. tomato (strain ATCC BAA-871 / DC3000).